The following is a 280-amino-acid chain: Ribosomal protein L11 methyltransferase (280 aa).

The S-adenosyl-L-methionine site is built by Thr130, Gly151, Asp172, and Asn213.

It belongs to the methyltransferase superfamily. PrmA family.

The protein resides in the cytoplasm. The enzyme catalyses L-lysyl-[protein] + 3 S-adenosyl-L-methionine = N(6),N(6),N(6)-trimethyl-L-lysyl-[protein] + 3 S-adenosyl-L-homocysteine + 3 H(+). Functionally, methylates ribosomal protein L11. The chain is Ribosomal protein L11 methyltransferase from Nitratiruptor sp. (strain SB155-2).